Here is a 592-residue protein sequence, read N- to C-terminus: Inactive glycosyltransferase 25 family member 3 (592 aa).

A signal peptide spans 1–19 (MHVARLLPLLLLLGQQLRA). N72, N150, N234, and N357 each carry an N-linked (GlcNAc...) asparagine glycan. Residues 540–592 (AEWLSDTETSSPWDDDSGRLISQTGSQKALRGPHLHLTGSSGHSLHPHHRDEL) are disordered. A Prevents secretion from ER motif is present at residues 589-592 (RDEL).

This sequence belongs to the glycosyltransferase 25 family.

Its subcellular location is the endoplasmic reticulum lumen. Its function is as follows. Probable cell adhesion protein involved in leukocyte transmigration across the blood-brain barrier. Does not express any beta-galactosyltransferase activity in vitro. This chain is Inactive glycosyltransferase 25 family member 3 (Cercam), found in Mus musculus (Mouse).